The chain runs to 159 residues: S-ribosylhomocysteine lyase (159 aa).

Positions 53, 57, and 124 each coordinate Fe cation.

The protein belongs to the LuxS family. Homodimer. Fe cation is required as a cofactor.

It catalyses the reaction S-(5-deoxy-D-ribos-5-yl)-L-homocysteine = (S)-4,5-dihydroxypentane-2,3-dione + L-homocysteine. Involved in the synthesis of autoinducer 2 (AI-2) which is secreted by bacteria and is used to communicate both the cell density and the metabolic potential of the environment. The regulation of gene expression in response to changes in cell density is called quorum sensing. Catalyzes the transformation of S-ribosylhomocysteine (RHC) to homocysteine (HC) and 4,5-dihydroxy-2,3-pentadione (DPD). The chain is S-ribosylhomocysteine lyase from Porphyromonas gingivalis (strain ATCC BAA-308 / W83).